The chain runs to 250 residues: Probable transcriptional regulatory protein SACE_2018 (250 aa).

The protein belongs to the TACO1 family.

It is found in the cytoplasm. The protein is Probable transcriptional regulatory protein SACE_2018 of Saccharopolyspora erythraea (strain ATCC 11635 / DSM 40517 / JCM 4748 / NBRC 13426 / NCIMB 8594 / NRRL 2338).